A 750-amino-acid polypeptide reads, in one-letter code: Rho GTPase-activating protein 9 (750 aa).

Residues 22–88 (PRGSQLCALY…PAAYMIEESI (67 aa)) enclose the SH3 domain. 2 disordered regions span residues 120–187 (ALPS…LMSE) and 242–319 (WKPP…LLDD). Positions 163–180 (RSLSQEDLPSEASASTAG) are enriched in polar residues. Residues 213–247 (LQRLDAWEQHLDPNSGRCFYINSLTGCKSWKPPRR) enclose the WW domain. Polar residues-rich tracts occupy residues 251-270 (ETNP…NDVL) and 291-300 (GSLSLSQRTS). Low complexity predominate over residues 301–317 (QLDPPALQAPRPLPQLL). The PH domain occupies 322 to 435 (EVEKSGLLNM…WHRALRTVIE (114 aa)). 3 lipid binding regions span residues 342-345 (RKNW), 397-399 (SSR), and 432-669 (TVIE…CLSQ). Over residues 446–462 (EAPTGRDQGSGDRENPL) the composition is skewed to basic and acidic residues. Residues 446–488 (EAPTGRDQGSGDRENPLELRLSGSGPAELSAGEDEEEESELVS) form a disordered region. The residue at position 475 (S475) is a Phosphoserine. Residues 476–485 (AGEDEEEESE) show a composition bias toward acidic residues. Residue S500 is modified to Phosphoserine. Residues 542–749 (CQLESLCQRE…LMLTNFTSLF (208 aa)) enclose the Rho-GAP domain.

In terms of assembly, interacts with FASLG. As to expression, predominantly expressed in peripheral blood leukocytes, spleen, and thymus.

Functionally, GTPase activator for the Rho-type GTPases by converting them to an inactive GDP-bound state. Has a substantial GAP activity toward CDC42 and RAC1 and less toward RHOA. Has a role in regulating adhesion of hematopoietic cells to the extracellular matrix. Binds phosphoinositides, and has the highest affinity for phosphatidylinositol 3,4,5-trisphosphate, followed by phosphatidylinositol 3,4-bisphosphate and phosphatidylinositol 4,5-bisphosphate. This chain is Rho GTPase-activating protein 9 (ARHGAP9), found in Homo sapiens (Human).